We begin with the raw amino-acid sequence, 295 residues long: Ribosomal RNA small subunit methyltransferase H (295 aa).

S-adenosyl-L-methionine-binding positions include 36-38 (GGH), Asp-56, Leu-90, Asp-104, and His-111.

The protein belongs to the methyltransferase superfamily. RsmH family.

Its subcellular location is the cytoplasm. It catalyses the reaction cytidine(1402) in 16S rRNA + S-adenosyl-L-methionine = N(4)-methylcytidine(1402) in 16S rRNA + S-adenosyl-L-homocysteine + H(+). In terms of biological role, specifically methylates the N4 position of cytidine in position 1402 (C1402) of 16S rRNA. The sequence is that of Ribosomal RNA small subunit methyltransferase H from Dictyoglomus turgidum (strain DSM 6724 / Z-1310).